The primary structure comprises 86 residues: Defensin-like protein a (86 aa).

The first 23 residues, 1 to 23, serve as a signal peptide directing secretion; that stretch reads MRCSVLFVVSYVIMSLLISHVQG. Cystine bridges form between cysteine 33–cysteine 81, cysteine 43–cysteine 67, cysteine 51–cysteine 76, and cysteine 65–cysteine 78.

This sequence belongs to the DEFL family. Expressed specifically in anthers.

It localises to the secreted. Its function is as follows. Involved in self-incompatibility. This is Defensin-like protein a (SCRa) from Arabidopsis lyrata (Lyre-leaved rock-cress).